The sequence spans 39 residues: Mating pheromone Er-11 (39 aa).

3 disulfides stabilise this stretch: Cys-3-Cys-19, Cys-10-Cys-34, and Cys-15-Cys-26.

As to quaternary structure, homodimer.

The protein resides in the secreted. Its function is as follows. Mating ciliate pheromones (or gamones) are diffusible extracellular communication signals that distinguish different intraspecific classes of cells commonly referred to as 'mating types'. They prepare the latter for conjugation by changing their cell surface properties. This Euplotes raikovi protein is Mating pheromone Er-11 (MAT11).